The chain runs to 292 residues: 5,10-methylenetetrahydrofolate reductase (292 aa).

The Proton donor/acceptor role is filled by E28. Residue T59 participates in NADH binding. Positions 60, 62, 88, 118, 119, 120, 132, 152, 156, 165, 168, 171, and 172 each coordinate FAD. (6S)-5-methyl-5,6,7,8-tetrahydrofolate is bound at residue D120. Q183 contributes to the NADH binding site. Q183 contributes to the (6S)-5-methyl-5,6,7,8-tetrahydrofolate binding site.

The protein belongs to the methylenetetrahydrofolate reductase family. Requires FAD as cofactor.

The catalysed reaction is (6S)-5-methyl-5,6,7,8-tetrahydrofolate + NAD(+) = (6R)-5,10-methylene-5,6,7,8-tetrahydrofolate + NADH + H(+). It functions in the pathway one-carbon metabolism; tetrahydrofolate interconversion. It participates in amino-acid biosynthesis; L-methionine biosynthesis via de novo pathway. Its function is as follows. Catalyzes the NADH-dependent reduction of 5,10-methylenetetrahydrofolate to 5-methyltetrahydrofolate. Is required to provide the methyl group necessary for methionine synthetase to convert homocysteine to methionine; the methyl group is given by 5-methyltetrahydrofolate. The chain is 5,10-methylenetetrahydrofolate reductase (metF) from Buchnera aphidicola subsp. Acyrthosiphon pisum (strain APS) (Acyrthosiphon pisum symbiotic bacterium).